Reading from the N-terminus, the 208-residue chain is LexA repressor (208 aa).

Residues 29 to 49 (VREICSAVGLSSTSTVHGHIS) constitute a DNA-binding region (H-T-H motif). Residues serine 129 and lysine 167 each act as for autocatalytic cleavage activity in the active site.

This sequence belongs to the peptidase S24 family. As to quaternary structure, homodimer.

It catalyses the reaction Hydrolysis of Ala-|-Gly bond in repressor LexA.. In terms of biological role, represses a number of genes involved in the response to DNA damage (SOS response), including recA and lexA. In the presence of single-stranded DNA, RecA interacts with LexA causing an autocatalytic cleavage which disrupts the DNA-binding part of LexA, leading to derepression of the SOS regulon and eventually DNA repair. The sequence is that of LexA repressor from Limosilactobacillus reuteri (strain DSM 20016) (Lactobacillus reuteri).